Reading from the N-terminus, the 1071-residue chain is Ubiquitin carboxyl-terminal hydrolase 7 (1071 aa).

Residues 467–532 (KARLQQEQQQ…MPTTPEIPPP (66 aa)) form a disordered region. Residues 471–480 (QQEQQQQQQQ) are compositionally biased toward low complexity. The segment covering 481 to 495 (PDSQDSFSAKESSTK) has biased composition (polar residues). Pro residues-rich tracts occupy residues 497–507 (PEPPSWKPPDL) and 516–532 (PPPP…IPPP). A USP domain is found at 609–1069 (TGLRNLGNTC…DVYVLFYERV (461 aa)). The active-site Nucleophile is Cys618. A disordered region spans residues 913 to 942 (RMLGGSGKRSSSSTPFSTGGNDSNNSSDYK). Residues 920–932 (KRSSSSTPFSTGG) are compositionally biased toward polar residues. The active-site Proton acceptor is the His1014.

Belongs to the peptidase C19 family.

The protein localises to the cytoplasm. The enzyme catalyses Thiol-dependent hydrolysis of ester, thioester, amide, peptide and isopeptide bonds formed by the C-terminal Gly of ubiquitin (a 76-residue protein attached to proteins as an intracellular targeting signal).. Involved in the sorting of ubiquitinated cargo proteins at the multivesicular body (MVB). The protein is Ubiquitin carboxyl-terminal hydrolase 7 (UBP7) of Saccharomyces cerevisiae (strain ATCC 204508 / S288c) (Baker's yeast).